The sequence spans 597 residues: Elongation factor 4 (597 aa).

Positions 2 to 184 constitute a tr-type G domain; it reads KNIRNFSIIA…EIVAKIPAPA (183 aa). GTP contacts are provided by residues 14-19 and 131-134; these read DHGKST and NKID.

The protein belongs to the TRAFAC class translation factor GTPase superfamily. Classic translation factor GTPase family. LepA subfamily.

Its subcellular location is the cell inner membrane. It catalyses the reaction GTP + H2O = GDP + phosphate + H(+). Functionally, required for accurate and efficient protein synthesis under certain stress conditions. May act as a fidelity factor of the translation reaction, by catalyzing a one-codon backward translocation of tRNAs on improperly translocated ribosomes. Back-translocation proceeds from a post-translocation (POST) complex to a pre-translocation (PRE) complex, thus giving elongation factor G a second chance to translocate the tRNAs correctly. Binds to ribosomes in a GTP-dependent manner. The chain is Elongation factor 4 from Neisseria meningitidis serogroup A / serotype 4A (strain DSM 15465 / Z2491).